Here is a 76-residue protein sequence, read N- to C-terminus: Conotoxin Cal5a L1 (76 aa).

A signal peptide spans 1–22 (MRFYIGLMAALMLTSILRTDSA). The propeptide occupies 23–42 (SVDQTGAEGGLALIERVIRQ). Residue Pro50 is modified to 4-hydroxyproline. Pro58 carries the post-translational modification 4-hydroxyproline; in form cal5a, and form cal5b. 4-hydroxyproline; in form cal5a, form cal5b, and form cal5c is present on Pro62. A 4-hydroxyproline; in form cal5a, form cal5b, form cal5c, and form cal5d modification is found at Pro64.

Post-translationally, contains 2 disulfide bonds that can be either 'C1-C3, C2-C4' or 'C1-C4, C2-C3', since these disulfide connectivities have been observed for conotoxins with cysteine framework V (for examples, see AC P0DQQ7 and AC P81755). Five different peptides have been described after total venom examination by HPLC-MS. Cal5a is the longest. Cal5b-Cal5e are identical in length but are differentially hydroxylated. It is possible that hydroxylation and proteolysis at position 53 are incomplete in some of these peptides. In terms of tissue distribution, expressed by the venom duct.

Its subcellular location is the secreted. Its function is as follows. Probable neurotoxin with unknown target. Possibly targets ion channels. The polypeptide is Conotoxin Cal5a L1 (Californiconus californicus (California cone)).